The chain runs to 355 residues: MDFLHRSGVLIIHHLQEDYRTYYGFLNFMSNVGDPRNIFSIYFPLWFQLNQNVGTKMIWVAVIGDWFNLIFKWILFGHRPYWWIQETEIYPNHSSPCLEQFPTTCETGPGSPSGHAMGSSCVWYVMVTAALSYTISRMEESSVTLHRLTWSFLWSVFWLIQISVCISRVFIATHFPHQVILGVIGGMLVAEAFEHTPGVHMASLSVYLKTNVFLFLFALGFYLLLRLFGIDLLWSVPIAKKWCANPDWIHIDSTPFAGLVRNLGVLFGLGFAINSEMFLRSCQGENGTKPSFRLLCALTSLTTMQLYRFIKIPTHAEPLFYLLSFCKSASIPLMVVALIPYCVHMLMRPGDKKTK.

The Lumenal segment spans residues 1–24 (MDFLHRSGVLIIHHLQEDYRTYYG). Residues 25–45 (FLNFMSNVGDPRNIFSIYFPL) traverse the membrane as a helical segment. The Cytoplasmic portion of the chain corresponds to 46–56 (WFQLNQNVGTK). The chain crosses the membrane as a helical span at residues 57–77 (MIWVAVIGDWFNLIFKWILFG). Over 78–115 (HRPYWWIQETEIYPNHSSPCLEQFPTTCETGPGSPSGH) the chain is Lumenal. Arg-79 provides a ligand contact to substrate. Asn-92 carries an N-linked (GlcNAc...) asparagine glycan. Residue His-115 is the Proton donor of the active site. A helical membrane pass occupies residues 116-136 (AMGSSCVWYVMVTAALSYTIS). At 137–146 (RMEESSVTLH) the chain is on the cytoplasmic side. Residues 147–167 (RLTWSFLWSVFWLIQISVCIS) traverse the membrane as a helical segment. Position 168 (Arg-168) is a topological domain, lumenal. Arg-168 contacts substrate. Residues 169–189 (VFIATHFPHQVILGVIGGMLV) traverse the membrane as a helical segment. His-174 functions as the Nucleophile in the catalytic mechanism. At 190–211 (AEAFEHTPGVHMASLSVYLKTN) the chain is on the cytoplasmic side. Residues 212-232 (VFLFLFALGFYLLLRLFGIDL) form a helical membrane-spanning segment. Topologically, residues 233-252 (LWSVPIAKKWCANPDWIHID) are lumenal. A helical transmembrane segment spans residues 253 to 273 (STPFAGLVRNLGVLFGLGFAI). Residues 274-290 (NSEMFLRSCQGENGTKP) are Cytoplasmic-facing. Residues 291 to 307 (SFRLLCALTSLTTMQLY) traverse the membrane as a helical segment. Residues 308-318 (RFIKIPTHAEP) are Lumenal-facing. Residues 319–339 (LFYLLSFCKSASIPLMVVALI) traverse the membrane as a helical segment. Over 340 to 355 (PYCVHMLMRPGDKKTK) the chain is Cytoplasmic. The short motif at 352–355 (KKTK) is the Prevents secretion from ER element.

This sequence belongs to the glucose-6-phosphatase family. N-glycosylated; the non-glycosylated form is more unstable and is degraded through the proteasome. Specifically expressed in pancreatic islet cells, in particular those of beta-cell origin. Not detected in testis, kidney, muscle, liver, lung, spleen, brain, pituitary, gastric fundus or heart.

The protein localises to the endoplasmic reticulum membrane. It catalyses the reaction D-glucose 6-phosphate + H2O = D-glucose + phosphate. The protein operates within carbohydrate biosynthesis; gluconeogenesis. In terms of biological role, may hydrolyze glucose-6-phosphate to glucose in the endoplasmic reticulum. May be responsible for glucose production through glycogenolysis and gluconeogenesis. This chain is Glucose-6-phosphatase 2 (G6pc2), found in Mus musculus (Mouse).